The chain runs to 215 residues: UPF0056 membrane protein bbp_248 (215 aa).

Transmembrane regions (helical) follow at residues 10–32, 52–74, 78–100, 119–141, 151–169, and 190–207; these read IYIS…PIFT, FSVA…LFGI, SFRI…GNFI, ISIV…TIVW, IFGC…WTLF, and IMGL…LAGL.

This sequence belongs to the UPF0056 (MarC) family.

It is found in the cell membrane. The polypeptide is UPF0056 membrane protein bbp_248 (Buchnera aphidicola subsp. Baizongia pistaciae (strain Bp)).